The following is an 86-amino-acid chain: Large ribosomal subunit protein eL20 (86 aa).

The protein belongs to the eukaryotic ribosomal protein eL20 family. As to quaternary structure, part of the 50S ribosomal subunit. Binds 23S rRNA.

The sequence is that of Large ribosomal subunit protein eL20 from Saccharolobus solfataricus (strain ATCC 35092 / DSM 1617 / JCM 11322 / P2) (Sulfolobus solfataricus).